A 425-amino-acid chain; its full sequence is AP-3 complex subunit mu (425 aa).

Residues 175-423 (TNEFFIHVLE…TIIAQNVSFR (249 aa)) form the MHD domain.

Belongs to the adaptor complexes medium subunit family.

Its subcellular location is the cytoplasm. The protein localises to the cytoskeleton. The protein resides in the microtubule organizing center. It is found in the spindle pole body. It localises to the membrane. Its subcellular location is the golgi apparatus. The protein localises to the cytoplasmic vesicle membrane. Its function is as follows. Part of the AP-3 complex, an adaptor-related complex which is not clathrin-associated. The complex is associated with the Golgi region as well as more peripheral structures. It facilitates the budding of vesicles from the Golgi membrane and may be directly involved in trafficking to the vacuole. The polypeptide is AP-3 complex subunit mu (apm3) (Schizosaccharomyces pombe (strain 972 / ATCC 24843) (Fission yeast)).